The following is a 250-amino-acid chain: Triosephosphate isomerase (250 aa).

Residue 9–11 (NWK) coordinates substrate. Catalysis depends on His95, which acts as the Electrophile. The active-site Proton acceptor is the Glu167. Residues Gly173, Ser213, and 234–235 (GG) contribute to the substrate site.

Belongs to the triosephosphate isomerase family. In terms of assembly, homodimer.

Its subcellular location is the cytoplasm. The enzyme catalyses D-glyceraldehyde 3-phosphate = dihydroxyacetone phosphate. Its pathway is carbohydrate biosynthesis; gluconeogenesis. It functions in the pathway carbohydrate degradation; glycolysis; D-glyceraldehyde 3-phosphate from glycerone phosphate: step 1/1. Its function is as follows. Involved in the gluconeogenesis. Catalyzes stereospecifically the conversion of dihydroxyacetone phosphate (DHAP) to D-glyceraldehyde-3-phosphate (G3P). The protein is Triosephosphate isomerase of Exiguobacterium sibiricum (strain DSM 17290 / CCUG 55495 / CIP 109462 / JCM 13490 / 255-15).